Here is a 321-residue protein sequence, read N- to C-terminus: Methenyltetrahydromethanopterin cyclohydrolase (321 aa).

The protein belongs to the MCH family.

The protein resides in the cytoplasm. It catalyses the reaction 5,10-methenyl-5,6,7,8-tetrahydromethanopterin + H2O = N(5)-formyl-5,6,7,8-tetrahydromethanopterin + H(+). The protein operates within one-carbon metabolism; methanogenesis from CO(2); 5,10-methenyl-5,6,7,8-tetrahydromethanopterin from CO(2): step 3/3. Its function is as follows. Catalyzes the reversible interconversion of 5-formyl-H(4)MPT to methenyl-H(4)MPT(+). The sequence is that of Methenyltetrahydromethanopterin cyclohydrolase from Methanosarcina mazei (strain ATCC BAA-159 / DSM 3647 / Goe1 / Go1 / JCM 11833 / OCM 88) (Methanosarcina frisia).